Reading from the N-terminus, the 211-residue chain is ATP phosphoribosyltransferase (211 aa).

This sequence belongs to the ATP phosphoribosyltransferase family. Short subfamily. Heteromultimer composed of HisG and HisZ subunits.

It localises to the cytoplasm. It carries out the reaction 1-(5-phospho-beta-D-ribosyl)-ATP + diphosphate = 5-phospho-alpha-D-ribose 1-diphosphate + ATP. It participates in amino-acid biosynthesis; L-histidine biosynthesis; L-histidine from 5-phospho-alpha-D-ribose 1-diphosphate: step 1/9. Functionally, catalyzes the condensation of ATP and 5-phosphoribose 1-diphosphate to form N'-(5'-phosphoribosyl)-ATP (PR-ATP). Has a crucial role in the pathway because the rate of histidine biosynthesis seems to be controlled primarily by regulation of HisG enzymatic activity. The sequence is that of ATP phosphoribosyltransferase from Pseudomonas fluorescens (strain Pf0-1).